The following is a 207-amino-acid chain: Imidazoleglycerol-phosphate dehydratase (207 aa).

It belongs to the imidazoleglycerol-phosphate dehydratase family.

The protein localises to the cytoplasm. The catalysed reaction is D-erythro-1-(imidazol-4-yl)glycerol 3-phosphate = 3-(imidazol-4-yl)-2-oxopropyl phosphate + H2O. The protein operates within amino-acid biosynthesis; L-histidine biosynthesis; L-histidine from 5-phospho-alpha-D-ribose 1-diphosphate: step 6/9. This is Imidazoleglycerol-phosphate dehydratase from Mycobacterium avium (strain 104).